The primary structure comprises 855 residues: MNESFDKDFSNHTPMMQQYLKLKAQHPEILLFYRMGDFYELFYDDAKRASQLLDISLTKRGASAGEPIPMAGIPHHAVENYLAKLVNQGESVAICEQIGDPATSKGPVERKVVRIVTPGTISDEALLQERQDNLLAAIWQDGKGYGYATLDISSGRFRLSEPADRETMAAELQRTNPAELLYAEDFAEMALIEGRRGLRRRPLWEFEIDTARQQLNLQFGTRDLVGFGVENASRGLCAAGCLLQYVKDTQRTSLPHIRSITMERQQDSIIMDAATRRNLEITQNLAGGVENTLAAVLDCTVTPMGSRMLKRWLHMPVRNTDILRERQQTIGALQDTVSELQPVLRQVGDLERILARLALRTARPRDLARMRHAFQQLPELHAQLETVDSAPVQALRKKMGDFAELRDLLERAIIDAPPVLVRDGGVIAPGYHEELDEWRALADGATDYLDCLEIRERERTGLDTLKVGYNAVHGYYIQISRGQSHLAPINYVRRQTLKNAERYIIPELKEYEDKVLTSKGKALALEKQLYDELFDLLLPHLADLQQSANALAELDVLVNLAERAWTLNYTCPTFTDKPGIRITEGRHPVVEQVLNEPFIANPLNLSPQRRMLIITGPNMGGKSTYMRQTALIALLAYIGSYVPAQNVEIGPIDRIFTRVGAADDLASGRSTFMVEMTETANILHNATENSLVLMDEIGRGTSTYDGLSLAWACAENLANKIKALTLFATHYFELTQLPEKMEGVANVHLDALEHGDTIAFMHSVQDGAASKSYGLAVAALAGVPKEVIKRARQKLRELESISPNAAATQVDGTQMSLLAAPEEASPAVEALENLDPDSLTPRQALEWIYRLKSLV.

An ATP-binding site is contributed by 616 to 623; the sequence is GPNMGGKS.

This sequence belongs to the DNA mismatch repair MutS family.

Its function is as follows. This protein is involved in the repair of mismatches in DNA. It is possible that it carries out the mismatch recognition step. This protein has a weak ATPase activity. The polypeptide is DNA mismatch repair protein MutS (Salmonella dublin (strain CT_02021853)).